The chain runs to 205 residues: Ribosomal RNA small subunit methyltransferase G (205 aa).

S-adenosyl-L-methionine contacts are provided by residues G66, F71, 119–120 (IE), and R135.

This sequence belongs to the methyltransferase superfamily. RNA methyltransferase RsmG family.

It is found in the cytoplasm. It catalyses the reaction guanosine(527) in 16S rRNA + S-adenosyl-L-methionine = N(7)-methylguanosine(527) in 16S rRNA + S-adenosyl-L-homocysteine. In terms of biological role, specifically methylates the N7 position of guanine in position 527 of 16S rRNA. The protein is Ribosomal RNA small subunit methyltransferase G of Rhizobium leguminosarum bv. trifolii (strain WSM2304).